A 695-amino-acid chain; its full sequence is Solute carrier family 53 member 1 (695 aa).

The Cytoplasmic segment spans residues Met1–Pro228. The SPX domain maps to Lys2–Gly224. Residues Lys158–Lys165 are important for inositol polyphosphate binding. The helical transmembrane segment at Ala229–Leu259 threads the bilayer. The Extracellular segment spans residues Glu260–Thr264. Residues Val265–Gly296 form a helical membrane-spanning segment. Over Val297–Asn309 the chain is Cytoplasmic. The chain crosses the membrane as a helical span at residues Asn310 to Ala337. The Extracellular portion of the chain corresponds to Pro338–Pro343. A helical membrane pass occupies residues Ile344 to Thr365. The segment at residues Phe366–Thr383 is an intramembrane region (helical). At Ala384–Lys388 the chain is on the cytoplasmic side. Residues Val389–Lys422 traverse the membrane as a discontinuously helical segment. Residues Asp398 and Asn401 each coordinate phosphate. Residues Trp423–Leu429 lie on the Extracellular side of the membrane. Residues Leu430–Arg471 form a discontinuously helical membrane-spanning segment. The 204-residue stretch at Phe439–Glu642 folds into the EXS domain. Arg472 is a topological domain (cytoplasmic). A helical transmembrane segment spans residues Ala473–Asn503. 2 residues coordinate phosphate: Lys482 and Tyr483. Residues His504–Asp506 are Extracellular-facing. Residues Thr507–Trp534 traverse the membrane as a helical segment. Residues Gly535 to Tyr553 are Cytoplasmic-facing. A discontinuously helical transmembrane segment spans residues Pro554–Lys584. Arg570 contributes to the phosphate binding site. The Extracellular segment spans residues Pro585 to His586. The helical transmembrane segment at Val587–Val625 threads the bilayer. Residues Arg602 and Arg603 each contribute to the phosphate site. Residues Arg626 to Thr695 are Cytoplasmic-facing. At Ser667 the chain carries Phosphoserine. The disordered stretch occupies residues Pro671–Thr695. A Phosphothreonine modification is found at Thr689.

It belongs to the SYG1 (TC 2.A.94) family. As to quaternary structure, homodimer. Expressed in pancreatic islets.

It localises to the cell membrane. It carries out the reaction phosphate(in) = phosphate(out). In terms of biological role, inorganic ion transporter that mediates phosphate ion export across plasma membrane. Plays a major role in phosphate homeostasis, preventing intracellular phosphate accumulation and possible calcium phosphate precipitation, ultimately preserving calcium signaling. Binds inositol hexakisphosphate (Ins6P) and similar inositol polyphosphates, such as 5-diphospho-inositol pentakisphosphate (5-InsP7), which are important intracellular signaling molecules involved in regulation of phosphate flux. Functionally, (Microbial infection) Receptor for xenotropic and polytropic murine leukemia (X- and P-MLV) retroviruses. Confers susceptibility to X- or P-MLV infection in vitro. This Mus musculus (Mouse) protein is Solute carrier family 53 member 1.